A 398-amino-acid polypeptide reads, in one-letter code: Enoate reductase 1 (398 aa).

Residues T37 and H191 each coordinate FMN. Residues H191 and N194 each contribute to the substrate site. Y196 functions as the Proton donor in the catalytic mechanism. Residues R243 and R348 each contribute to the FMN site. Y375 is a binding site for substrate.

Belongs to the NADH:flavin oxidoreductase/NADH oxidase family. As to quaternary structure, homodimer or heterodimer. The cofactor is FMN.

It carries out the reaction butanoate + NAD(+) = (2E)-2-butenoate + NADH + H(+). In terms of biological role, enoate reductase with broad substrate specificity for different alpha,beta-unsaturated carbonyl compounds. Prefers NADPH over NADH as cofactor. The polypeptide is Enoate reductase 1 (KYE1) (Kluyveromyces lactis (strain ATCC 8585 / CBS 2359 / DSM 70799 / NBRC 1267 / NRRL Y-1140 / WM37) (Yeast)).